Here is a 245-residue protein sequence, read N- to C-terminus: 1-(5-phosphoribosyl)-5-[(5-phosphoribosylamino)methylideneamino] imidazole-4-carboxamide isomerase (245 aa).

Aspartate 8 acts as the Proton acceptor in catalysis. The Proton donor role is filled by aspartate 130.

The protein belongs to the HisA/HisF family.

The protein resides in the cytoplasm. The enzyme catalyses 1-(5-phospho-beta-D-ribosyl)-5-[(5-phospho-beta-D-ribosylamino)methylideneamino]imidazole-4-carboxamide = 5-[(5-phospho-1-deoxy-D-ribulos-1-ylimino)methylamino]-1-(5-phospho-beta-D-ribosyl)imidazole-4-carboxamide. The protein operates within amino-acid biosynthesis; L-histidine biosynthesis; L-histidine from 5-phospho-alpha-D-ribose 1-diphosphate: step 4/9. The protein is 1-(5-phosphoribosyl)-5-[(5-phosphoribosylamino)methylideneamino] imidazole-4-carboxamide isomerase of Pseudomonas entomophila (strain L48).